Reading from the N-terminus, the 487-residue chain is RCC1 repeat-containing protein DDB_G0284033 (487 aa).

RCC1 repeat units follow at residues 66–127 (SNKV…FSGY), 207–259 (RSLI…ALSN), 260–313 (DGKL…ALTS), 373–426 (NGNI…IVET), and 428–483 (DGRF…SLNS).

This is RCC1 repeat-containing protein DDB_G0284033 from Dictyostelium discoideum (Social amoeba).